Reading from the N-terminus, the 338-residue chain is Glycerol-3-phosphate dehydrogenase [NAD(P)+] (338 aa).

NADPH is bound by residues Ser11, Trp12, His32, His33, and Lys109. Sn-glycerol 3-phosphate is bound by residues Lys109, Gly140, and Ser142. Ala144 contacts NADPH. Positions 195, 248, 258, 259, and 260 each coordinate sn-glycerol 3-phosphate. Lys195 (proton acceptor) is an active-site residue. Arg259 serves as a coordination point for NADPH. The NADPH site is built by Val283 and Glu285.

This sequence belongs to the NAD-dependent glycerol-3-phosphate dehydrogenase family.

Its subcellular location is the cytoplasm. It carries out the reaction sn-glycerol 3-phosphate + NAD(+) = dihydroxyacetone phosphate + NADH + H(+). It catalyses the reaction sn-glycerol 3-phosphate + NADP(+) = dihydroxyacetone phosphate + NADPH + H(+). The protein operates within membrane lipid metabolism; glycerophospholipid metabolism. Catalyzes the reduction of the glycolytic intermediate dihydroxyacetone phosphate (DHAP) to sn-glycerol 3-phosphate (G3P), the key precursor for phospholipid synthesis. This is Glycerol-3-phosphate dehydrogenase [NAD(P)+] from Leuconostoc citreum (strain KM20).